The chain runs to 231 residues: Ribose-5-phosphate isomerase A (231 aa).

Substrate-binding positions include Ser-31–Thr-34, Asp-87–Asp-90, and Lys-100–Gly-103. The active-site Proton acceptor is the Glu-109. Position 127 (Lys-127) interacts with substrate.

This sequence belongs to the ribose 5-phosphate isomerase family. In terms of assembly, homodimer.

The enzyme catalyses aldehydo-D-ribose 5-phosphate = D-ribulose 5-phosphate. It participates in carbohydrate degradation; pentose phosphate pathway; D-ribose 5-phosphate from D-ribulose 5-phosphate (non-oxidative stage): step 1/1. Its function is as follows. Catalyzes the reversible conversion of ribose-5-phosphate to ribulose 5-phosphate. This Chlamydia pneumoniae (Chlamydophila pneumoniae) protein is Ribose-5-phosphate isomerase A.